The chain runs to 447 residues: Tubulin beta chain (447 aa).

The GTP site is built by Gln11, Glu69, Ser138, Gly142, Thr143, Gly144, Asn204, and Asn226. Residue Glu69 participates in Mg(2+) binding. Positions 424-447 (QYQEASVSDAEEEYDEEAPLEGEE) are disordered. The segment covering 432–447 (DAEEEYDEEAPLEGEE) has biased composition (acidic residues).

It belongs to the tubulin family. As to quaternary structure, dimer of alpha and beta chains. A typical microtubule is a hollow water-filled tube with an outer diameter of 25 nm and an inner diameter of 15 nM. Alpha-beta heterodimers associate head-to-tail to form protofilaments running lengthwise along the microtubule wall with the beta-tubulin subunit facing the microtubule plus end conferring a structural polarity. Microtubules usually have 13 protofilaments but different protofilament numbers can be found in some organisms and specialized cells. Mg(2+) serves as cofactor.

The protein resides in the cytoplasm. Its subcellular location is the cytoskeleton. Tubulin is the major constituent of microtubules, a cylinder consisting of laterally associated linear protofilaments composed of alpha- and beta-tubulin heterodimers. Microtubules grow by the addition of GTP-tubulin dimers to the microtubule end, where a stabilizing cap forms. Below the cap, tubulin dimers are in GDP-bound state, owing to GTPase activity of alpha-tubulin. This chain is Tubulin beta chain (TUB1), found in Zymoseptoria tritici (Speckled leaf blotch fungus).